We begin with the raw amino-acid sequence, 388 residues long: Norsolorinic acid reductase A (388 aa).

Asp69 is a binding site for NADP(+). Tyr74 acts as the Proton donor in catalysis. Residue His148 coordinates substrate. NADP(+)-binding positions include 178 to 179 (SD), Gln204, 233 to 243 (GVLGRGQFRSA), and 300 to 308 (RKVEHLKEN).

The protein belongs to the aldo/keto reductase family. Aldo/keto reductase 2 subfamily.

The protein operates within mycotoxin biosynthesis; aflatoxin biosynthesis. Its function is as follows. Norsolorinic acid reductase; part of the gene cluster that mediates the biosynthesis of aflatoxins, a group of polyketide-derived furanocoumarins, and part of the most toxic and carcinogenic compounds among the known mycotoxins. The four major aflatoxins produced by A.parasiticus are aflatoxin B1 (AFB1), aflatoxin B2 (AFB2), aflatoxin G1 (AFG1) and aflatoxin G2 (AFG2). Within the aflatoxin pathway, the norsolorinic acid reductase aflE may play a role in the conversion of norsolorinic acid (NOR) to averantin (AVN). The biosynthesis of aflatoxins begins with the norsolorinic acid synthase aflC that combines a hexanoyl starter unit produced by the fatty acid synthase aflA/aflB and 7 malonyl-CoA extender units to synthesize the precursor NOR. The second step is the conversion of NOR to averantin and requires the norsolorinic acid ketoreductase aflD, which catalyzes the dehydration of norsolorinic acid to form (1'S)-averantin. The norsolorinic acid reductases aflE and aflF may also play a role in the conversion of NOR to AVN. The cytochrome P450 monooxygenase aflG then catalyzes the hydroxylation of AVN to 5'hydroxyaverantin (HAVN). The next step is performed by the 5'-hydroxyaverantin dehydrogenase aflH that transforms HAVN to 5'-oxoaverantin (OAVN) which is further converted to averufin (AVF) by aflK that plays a dual role in the pathway, as a 5'-oxoaverantin cyclase that mediates conversion of 5'-oxoaverantin, as well as a versicolorin B synthase in a later step in the pathway. The averufin oxidase aflI catalyzes the conversion of AVF to versiconal hemiacetal acetate (VHA). VHA is then the substrate for the versiconal hemiacetal acetate esterase aflJ to yield versiconal (VAL). Versicolorin B synthase aflK then converts VAL to versicolorin B (VERB) by closing the bisfuran ring of aflatoxin which is required for DNA-binding, thus giving to aflatoxin its activity as a mutagen. Then, the activity of the versicolorin B desaturase aflL leads to versicolorin A (VERA). A branch point starts from VERB since it can also be converted to dihydrodemethylsterigmatocystin (DMDHST), probably also by aflL, VERA being a precursor for aflatoxins B1 and G1, and DMDHST for aflatoxins B2 and G2. Next, the versicolorin reductase aflM and the cytochrome P450 monooxygenase aflN are involved in conversion of VERA to demethylsterigmatocystin (DMST). AflX and aflY seem also involved in this step, through probable aflX-mediated epoxide ring-opening step following versicolorin A oxidation and aflY-mediated Baeyer-Villiger oxidation required for the formation of the xanthone ring. The methyltransferase aflO then leads to the modification of DMST to sterigmatocystin (ST), and of DMDHST to dihydrosterigmatocystin (DHST). Both ST and DHST are then substrates of the O-methyltransferase aflP to yield O-methylsterigmatocystin (OMST) and dihydro-O-methylsterigmatocystin (DHOMST), respectively. Finally OMST is converted to aflatoxins B1 and G1, and DHOMST to aflatoxins B2 and G2, via the action of several enzymes including O-methylsterigmatocystin oxidoreductase aflQ, the cytochrome P450 monooxygenase aflU, but also the NADH-dependent flavin oxidoreductase nadA which is specifically required for the synthesis of AFG1. This chain is Norsolorinic acid reductase A, found in Aspergillus parasiticus (strain ATCC 56775 / NRRL 5862 / SRRC 143 / SU-1).